The following is a 346-amino-acid chain: uncharacterized protein (346 aa).

8 helical membrane passes run 15–35 (YLRG…LLTV), 55–75 (VEAR…YLFI), 93–113 (ILVL…EALT), 139–159 (ILLL…PLIL), 182–202 (IFTF…YCYV), 229–249 (LGVA…LLLL), 269–289 (LTNY…FHLF), and 295–315 (LQSL…SAMW).

To E.coli YeiB, B.subtilis YxaH and B.subtilis YrkO.

Its subcellular location is the cell membrane. In terms of biological role, involved in transport. This is an uncharacterized protein from Bacillus acidopullulyticus.